Here is a 1962-residue protein sequence, read N- to C-terminus: Sodium channel protein type 10 subunit alpha (1962 aa).

Residues 1 to 125 (MEFPFGSLET…FNLIRRTAIK (125 aa)) are Cytoplasmic-facing. The interval 32-56 (QAAKKAKGKHREQKDQEEKPRPQLD) is disordered. Positions 33-42 (AAKKAKGKHR) are enriched in basic residues. The span at 43-55 (EQKDQEEKPRPQL) shows a compositional bias: basic and acidic residues. One copy of the I repeat lies at 116-414 (FNLIRRTAIK…VTMAYEEQNQ (299 aa)). Residues 126-149 (VSVHSWFSLFITVTILVNCVGMTQ) form a helical membrane-spanning segment. Over 150 to 154 (TELPD) the chain is Extracellular. A helical membrane pass occupies residues 155-174 (RIEYVFTVIYTFEALIKILA). At 175-187 (RGFCLNEFAYLRD) the chain is on the cytoplasmic side. A helical transmembrane segment spans residues 188–206 (PWDWLDFSVITLAYIGEAT). At 207 to 212 (ALRGIS) the chain is on the extracellular side. The chain crosses the membrane as a helical; Voltage-sensor span at residues 213–232 (GLRTFRVLRALKTVSVIPGL). Residues 233-248 (KVIVGALIHSVRKLAD) lie on the Cytoplasmic side of the membrane. The chain crosses the membrane as a helical span at residues 249–272 (VTILTVFCLSVFALVGLQLFKGNL). At 273–350 (KNKCVKNCAA…PDFNYTSFDS (78 aa)) the chain is on the extracellular side. A disulfide bridge links Cys276 with Cys328. 4 N-linked (GlcNAc...) asparagine glycosylation sites follow: Asn284, Asn288, Asn321, and Asn344. An intramembrane region (pore-forming) is located at residues 351–375 (FAWAFLSLFRLMTQDSWERLYQQTL). Residues 376–382 (RASGKMY) lie on the Extracellular side of the membrane. The helical transmembrane segment at 383-408 (MVFFVLVIFLGSFYLVNLILAVVTMA) threads the bilayer. Residues 409–668 (YEEQNQATID…TWVKLKTVLF (260 aa)) lie on the Cytoplasmic side of the membrane. A phosphoserine mark is found at Ser450, Ser453, Ser476, and Ser488. A compositionally biased stretch (polar residues) spans 452-463 (HSCNGSPLPSKN). Disordered stretches follow at residues 452–493 (HSCN…PYNQ) and 521–586 (LDTS…TGEL). Ser621 and Ser624 each carry phosphoserine. One copy of the II repeat lies at 656–920 (CCPTWVKLKT…DEDGEVNNLQ (265 aa)). The helical transmembrane segment at 669-693 (GIVTDPFAELTTTLCIVVNTVFMAM) threads the bilayer. Residues 694-704 (EHHGMSSAFEA) lie on the Extracellular side of the membrane. Residues 705–728 (MLQIGNIVFTVFFTAEMVFKIIAF) traverse the membrane as a helical segment. Residues 729–736 (DPYYYFQK) are Cytoplasmic-facing. A helical membrane pass occupies residues 737–756 (RWNIFDCIIVTVSLIELGAA). The Extracellular portion of the chain corresponds to 757 to 762 (RKGSLS). The helical; Voltage-sensor transmembrane segment at 763 to 782 (VLRTFRLLRVFKLAKSWPTL) threads the bilayer. The Cytoplasmic portion of the chain corresponds to 783 to 798 (NTLIKIIGNSVGALGN). A helical membrane pass occupies residues 799–819 (LTIILAIIVFVFALVGKQLLG). The Extracellular segment spans residues 820–843 (ENYRDNRRNISAPNEEWPRWHMHD). N-linked (GlcNAc...) asparagine glycosylation occurs at Asn828. The segment at residues 844 to 864 (FFHSFLIVFRILCGEWIENMW) is an intramembrane region (pore-forming). Residues 865-873 (ACMEVGQKS) lie on the Extracellular side of the membrane. Cys866 and Cys875 are disulfide-bonded. A helical membrane pass occupies residues 874–899 (ICLILFLTVMVLGNLVVLNLFTALLL). Residues 900-1154 (NSFSADNLAT…GWQVRKTCYR (255 aa)) are Cytoplasmic-facing. Residues 1015–1026 (LDDLEEDGEEDS) show a composition bias toward acidic residues. Residues 1015–1035 (LDDLEEDGEEDSQSSQQEVIL) are disordered. One copy of the III repeat lies at 1147–1456 (QVRKTCYRIV…KKYYNAMKKL (310 aa)). A helical membrane pass occupies residues 1155–1178 (IVEHSWFESFIIFMILLSSGSLAF). Residues 1179–1191 (EDYHLDQKPTVKA) lie on the Extracellular side of the membrane. A helical membrane pass occupies residues 1192–1217 (LLEYTDRMFTFIFVLEMLLKWVAYGF). The Cytoplasmic segment spans residues 1218 to 1223 (KKYFTN). Residues 1224–1245 (AWCWLDFLIVNISLISLIAKIL) form a helical membrane-spanning segment. Residues 1246-1249 (QYSD) are Extracellular-facing. A helical; Voltage-sensor membrane pass occupies residues 1250–1271 (VASIKALRTLRALRPLRALSRF). Topologically, residues 1272 to 1290 (EGMRVVVDALVGAIPSIMN) are cytoplasmic. The helical transmembrane segment at 1291 to 1318 (VLLVCLIFWLIFSTMGVNFFAGKFGRCI) threads the bilayer. Asn1319, Asn1335, and Asn1343 each carry an N-linked (GlcNAc...) asparagine glycan. Residues 1319-1360 (NKTNEYFSLVPLSIVNNISDCKYQNHTGSFFWVNVKVNFDNV) are Extracellular-facing. The segment at residues 1361–1382 (AMGYLALLQVATFKGWMDIMYA) is an intramembrane region (pore-forming). Over 1383–1398 (AVDARDVNLQPKWEDN) the chain is Extracellular. A helical membrane pass occupies residues 1399–1425 (VYMYLYFVIFIIFGGFFTLNLFVGVII). Topologically, residues 1426–1478 (DNFNQQKKKLGGQDIFMTEEQKKYYNAMKKLGSKKPQKPIPRPLNKYQGFVFD) are cytoplasmic. A Phosphoserine; by PKC modification is found at Ser1458. Residues 1465 to 1764 (IPRPLNKYQG…WEKFDPEATQ (300 aa)) form an IV repeat. A helical membrane pass occupies residues 1479–1502 (IVTKQAFDIVIMVLICLNMITMMV). The Extracellular segment spans residues 1503–1513 (ETDEQSAEKTK). The chain crosses the membrane as a helical span at residues 1514–1537 (ILNKINQFFVAVFTGECVMKMFAL). The Cytoplasmic segment spans residues 1538–1543 (RHYYFT). Residues 1544–1567 (NGWNVFDFIVVVLSIGSLVFSVIL) traverse the membrane as a helical segment. Residues 1568–1579 (TSLENYFSPTLF) are Extracellular-facing. The helical; Voltage-sensor transmembrane segment at 1580–1601 (RVIRLARIGRILRLIRAAKGIR) threads the bilayer. Residues 1602-1616 (TLLFALMMSLPALFN) lie on the Cytoplasmic side of the membrane. The helical transmembrane segment at 1617-1639 (IGLLLFLVMFIYSIFGMASFPHV) threads the bilayer. Residues 1640 to 1653 (SWEAGIDDMFNFQT) lie on the Extracellular side of the membrane. Residues 1654 to 1676 (FANSMLCLFQITTSAGWDGLLSP) constitute an intramembrane region (pore-forming). Over 1677–1704 (ILNTGPPYCDPNLPNSNGSRGNCGSPAV) the chain is Extracellular. Asn1693 carries N-linked (GlcNAc...) asparagine glycosylation. The chain crosses the membrane as a helical span at residues 1705 to 1729 (GILFFTTYIIISFLIVVNMYIAVIL). Residues 1730 to 1962 (ENFNVATQES…TSKKVTAPGP (233 aa)) lie on the Cytoplasmic side of the membrane. Residues 1858–1887 (EDISATVIQKAYRSYVLHRSMTISNPPAVP) form the IQ domain. The tract at residues 1914-1962 (KSETASAASFPPSYDSVTRGLSDQINMSTSSSMQNEDEGTSKKVTAPGP) is disordered. Residues 1928-1947 (DSVTRGLSDQINMSTSSSMQ) are compositionally biased toward polar residues.

The protein belongs to the sodium channel (TC 1.A.1.10) family. Nav1.8/SCN10A subfamily. The channel consists of an ion conducting pore forming alpha-subunit regulated by one or more associated auxiliary subunits SCN1B, SCN2B and SCN3B; electrophysiological properties may vary depending on the type of the associated beta subunits. Found in a number of complexes with PRX, DYNLT1 and PDZD2. Interacts with proteins such as FSTL1, PRX, DYNLT1, PDZD2, S100A10 and many others. Interacts with NEDD4 and NEDD4L. Post-translationally, ubiquitinated by NEDD4L; which promotes its endocytosis. Phosphorylation at Ser-1458 by PKC in a highly conserved cytoplasmic loop slows inactivation of the sodium channel and reduces peak sodium currents. In terms of processing, lacks the cysteine which covalently binds the conotoxin GVIIJ. This cysteine (position 825) is speculated in other sodium channel subunits alpha to be implied in covalent binding with the sodium channel subunit beta-2 or beta-4. As to expression, expressed in nodose ganglia, but not in cortex, hippocampus, cerebellum, liver, heart and skeletal muscle.

The protein resides in the cell membrane. The enzyme catalyses Na(+)(in) = Na(+)(out). In terms of biological role, tetrodotoxin-resistant channel that mediates the voltage-dependent sodium ion permeability of excitable membranes. Assuming opened or closed conformations in response to the voltage difference across the membrane, the protein forms a sodium-selective channel through which sodium ions may pass in accordance with their electrochemical gradient. Plays a role in neuropathic pain mechanisms. The chain is Sodium channel protein type 10 subunit alpha (SCN10A) from Canis lupus familiaris (Dog).